A 781-amino-acid chain; its full sequence is N-acetylneuraminate (7)9-O-acetyltransferase (781 aa).

The Cytoplasmic portion of the chain corresponds to 1 to 15 (MAVLAYNLGKREINQ). The helical transmembrane segment at 16 to 36 (YFSIKNAKLLAAAAVVLLTVF) threads the bilayer. Topologically, residues 37-308 (HAASRHYGSS…SAPPLSVLQK (272 aa)) are lumenal. The Acyl-ester intermediate role is filled by S94. 3 N-linked (GlcNAc...) asparagine glycosylation sites follow: N139, N185, and N239. Catalysis depends on residues D264 and H267. A helical transmembrane segment spans residues 309–329 (LAAAVLLVSVVCFVLLGFSSH). The disordered stretch occupies residues 330–350 (RKSRPAPDVESGEEKKHPAAV). The Cytoplasmic segment spans residues 330 to 354 (RKSRPAPDVESGEEKKHPAAVGQLN). The helical transmembrane segment at 355-375 (PKGPLLAIGKMSLIMLYFYLC) threads the bilayer. At 376–386 (DRADIFMKEQK) the chain is on the lumenal side. The chain crosses the membrane as a helical span at residues 387–407 (FYTHSAFFIPLIYIFVLGVFY). Residues 408 to 430 (SENSKETKLLNREQTDEWKGWMQ) lie on the Cytoplasmic side of the membrane. Residues 431–451 (LVILIYHISGASAFIPVYMHV) form a helical membrane-spanning segment. A topological domain (lumenal) is located at residue R452. The helical transmembrane segment at 453–473 (VLVAAYLFQTGYGHFSFFWLK) threads the bilayer. The Cytoplasmic portion of the chain corresponds to 474–477 (GDFG). The chain crosses the membrane as a helical span at residues 478–498 (LYRVCQVLFRLNFLVVVLCLV). At 499 to 504 (MDRPYQ) the chain is on the lumenal side. Residues 505–525 (FYYFVPLVTFWFAVIYATMAL) form a helical membrane-spanning segment. At 526 to 537 (WPQILQKQANGS) the chain is on the cytoplasmic side. A helical transmembrane segment spans residues 538 to 558 (AFWNLALLLKLLGLLLFIGFF). The Lumenal segment spans residues 559 to 595 (AYSQELFEGIFSVWPLSKLFELQGSIHEWWFRWKLDR). Residues 596–616 (FAVVNGMLFAFIYLLLQKYQL) form a helical membrane-spanning segment. Residues 617 to 629 (LSEGKGEPLFSNK) are Cytoplasmic-facing. The chain crosses the membrane as a helical span at residues 630–650 (ISNCLLFVSVVSFMTYSIWAS). The Lumenal segment spans residues 651 to 660 (GCKNKSECNE). A glycan (N-linked (GlcNAc...) asparagine) is linked at N654. The chain crosses the membrane as a helical span at residues 661-681 (MHPYISVILAFILIRNIPGYA). Residues 682–687 (RSLYSS) are Cytoplasmic-facing. A helical transmembrane segment spans residues 688–708 (FFAWFGKISLELFICQYHIWL). The Lumenal portion of the chain corresponds to 709-714 (AADTKG). Residues 715–735 (ILVLIPGNPTLNIIVSTFIFV) form a helical membrane-spanning segment. The Cytoplasmic segment spans residues 736–756 (CVAHEISQITNDLAQVAIPKE). Residues 757–777 (SGPLLKRLLGAGVFLVLVLTL) form a helical membrane-spanning segment. Residues 778–781 (SQKD) are Lumenal-facing.

Belongs to the PC-esterase family. CASD1 subfamily.

The protein localises to the golgi apparatus membrane. It carries out the reaction CMP-N-acetyl-beta-neuraminate + acetyl-CoA = CMP-N-acetyl-9-O-acetyl-beta-neuraminate + CoA. The catalysed reaction is a ganglioside GD3 (d18:1(4E)) + acetyl-CoA = a ganglioside Ac-O-7-GD3(d18:1(4E)) + CoA. The enzyme catalyses CMP-N-acetyl-beta-neuraminate + acetyl-CoA = CMP-N-acetyl-7-O-acetyl-beta-neuraminate + CoA. Key enzyme in the biosynthesis of O-acetylated (O-Ac) sialoglycans such as gangliosides O-AcGD3 and O-AcGD2, which affect various processes such as cell-cell interactions, host-pathogen recognition. Catalyzes the transfer of an acetyl group from a donor, the acetyl-coenzyme-A molecule (acetyl-CoA), to the C7/8/9 OH-position of a sialic acid residue. The primary site of O-acetyl group transfer on sialic acid seems to depend on cell type and can be C7, from which the O-acetyl group could subsequently migrate to the C8 and then to the C9 position, or at C9 with possibility of migrating to the C8 and then to the C7 position. Together with ST8SIA1 (GD3 synthase) it increases the levels of ganglioside Ac-O-7-GD3. Can transfer the acetyl group from acetyl-CoA to free sialate (N-acetylneuraminate, Neu5Ac) in vitro, but has preferred substrate specificity for CMP-activated sialate (CMP-Neu5Ac), resulting in the formation of 9-O-acetylated CMP-Neu5Ac (CMP-Neu5,9Ac2). CMP-Neu5,9Ac2 may be used by sialyltransferases as a sialate donor for glycoconjugate acceptors such as ganglioside GD3. O-acetylation at position C9 of ganglioside GD3 can counteract the pro-apoptotic effects of the ganglioside GD3 in tumor cells. The polypeptide is N-acetylneuraminate (7)9-O-acetyltransferase (Danio rerio (Zebrafish)).